The chain runs to 225 residues: Ribonuclease 3 (225 aa).

Residues 7 to 129 form the RNase III domain; the sequence is IPRLCRTLGY…IIGAIYLDSD (123 aa). Glu42 lines the Mg(2+) pocket. The active site involves Asp46. Residues Asp115 and Glu118 each contribute to the Mg(2+) site. The active site involves Glu118. A DRBM domain is found at 155 to 225; the sequence is DPKTLLQEHL…AAQVLELIKK (71 aa).

It belongs to the ribonuclease III family. In terms of assembly, homodimer. It depends on Mg(2+) as a cofactor.

It is found in the cytoplasm. It catalyses the reaction Endonucleolytic cleavage to 5'-phosphomonoester.. Functionally, digests double-stranded RNA. Involved in the processing of primary rRNA transcript to yield the immediate precursors to the large and small rRNAs (23S and 16S). Processes some mRNAs, and tRNAs when they are encoded in the rRNA operon. Processes pre-crRNA and tracrRNA of type II CRISPR loci if present in the organism. The sequence is that of Ribonuclease 3 from Shewanella piezotolerans (strain WP3 / JCM 13877).